Consider the following 414-residue polypeptide: Serine/threonine transporter SstT (414 aa).

Residues Thr-2–His-15 are Cytoplasmic-facing. Residues Gly-16–Ser-36 traverse the membrane as a helical segment. Topologically, residues Lys-37 to Leu-45 are periplasmic. Residues Leu-46–Val-66 form a helical membrane-spanning segment. The Cytoplasmic portion of the chain corresponds to Met-67–Pro-83. The chain crosses the membrane as a helical span at residues Ile-84–Phe-104. Residues Ala-105–Asp-142 lie on the Periplasmic side of the membrane. A helical membrane pass occupies residues Ala-143 to Leu-163. Residues Arg-164–Asn-179 are Cytoplasmic-facing. Residues Ala-180–Val-200 traverse the membrane as a helical segment. Topologically, residues Ser-201–Gln-217 are periplasmic. A helical membrane pass occupies residues Leu-218–Val-238. Over Trp-239–Asn-299 the chain is Cytoplasmic. A helical transmembrane segment spans residues Met-300 to Ile-320. At Pro-321–Ser-331 the chain is on the periplasmic side. Residues Val-332 to Ile-352 form a helical membrane-spanning segment. The Cytoplasmic portion of the chain corresponds to Pro-353–Asn-414.

This sequence belongs to the dicarboxylate/amino acid:cation symporter (DAACS) (TC 2.A.23) family.

It localises to the cell inner membrane. It catalyses the reaction L-serine(in) + Na(+)(in) = L-serine(out) + Na(+)(out). The catalysed reaction is L-threonine(in) + Na(+)(in) = L-threonine(out) + Na(+)(out). Its function is as follows. Involved in the import of serine and threonine into the cell, with the concomitant import of sodium (symport system). The protein is Serine/threonine transporter SstT of Shigella flexneri.